Reading from the N-terminus, the 531-residue chain is Probable inactive beta-glucosidase 25 (531 aa).

The N-terminal stretch at 1–24 (MALKAILFLGLFLVVIVSPITVYG) is a signal peptide. A beta-D-glucoside contacts are provided by residues glutamine 53 and 202 to 203 (NE). Glutamate 203 (proton donor) is an active-site residue. Cysteines 222 and 230 form a disulfide. Residues phenylalanine 348 and 477 to 478 (EW) each bind a beta-D-glucoside.

Belongs to the glycosyl hydrolase 1 family.

This Arabidopsis thaliana (Mouse-ear cress) protein is Probable inactive beta-glucosidase 25.